The primary structure comprises 274 residues: Nitrogenase iron protein (274 aa).

8 to 15 (GKGGIGKS) is a binding site for ATP. Cys-94 contributes to the [4Fe-4S] cluster binding site. The residue at position 97 (Arg-97) is an ADP-ribosylarginine; by dinitrogenase reductase ADP-ribosyltransferase. Cys-131 contacts [4Fe-4S] cluster.

It belongs to the NifH/BchL/ChlL family. Homodimer. It depends on [4Fe-4S] cluster as a cofactor. In terms of processing, the reversible ADP-ribosylation of Arg-97 inactivates the nitrogenase reductase and regulates nitrogenase activity.

It catalyses the reaction N2 + 8 reduced [2Fe-2S]-[ferredoxin] + 16 ATP + 16 H2O = H2 + 8 oxidized [2Fe-2S]-[ferredoxin] + 2 NH4(+) + 16 ADP + 16 phosphate + 6 H(+). The key enzymatic reactions in nitrogen fixation are catalyzed by the nitrogenase complex, which has 2 components: the iron protein and the molybdenum-iron protein. The chain is Nitrogenase iron protein from Azobacteroides pseudotrichonymphae genomovar. CFP2.